Reading from the N-terminus, the 230-residue chain is uncharacterized protein (230 aa).

Catalysis depends on charge relay system residues Ser-124 and His-158.

It belongs to the peptidase S51 family.

This is an uncharacterized protein from Bacillus subtilis (strain 168).